A 360-amino-acid chain; its full sequence is Probable cinnamyl alcohol dehydrogenase 1 (360 aa).

Cys-47 is a Zn(2+) binding site. Residue Thr-49 participates in NADP(+) binding. Residues His-69, Glu-70, Cys-100, Cys-103, Cys-106, Cys-114, and Cys-163 each contribute to the Zn(2+) site. NADP(+) contacts are provided by residues Thr-167, 189 to 194, 212 to 217, Thr-252, Gly-276, and 299 to 301; these read GLGGVG, SSSDKK, and SFI.

Belongs to the zinc-containing alcohol dehydrogenase family. Homodimer. The cofactor is Zn(2+).

The enzyme catalyses (E)-cinnamyl alcohol + NADP(+) = (E)-cinnamaldehyde + NADPH + H(+). The catalysed reaction is (E)-coniferol + NADP(+) = (E)-coniferaldehyde + NADPH + H(+). It catalyses the reaction (E)-sinapyl alcohol + NADP(+) = (E)-sinapaldehyde + NADPH + H(+). It carries out the reaction (E)-4-coumaroyl alcohol + NADP(+) = (E)-4-coumaraldehyde + NADPH + H(+). The enzyme catalyses (E)-caffeyl alcohol + NADP(+) = (E)-caffeyl aldehyde + NADPH + H(+). It functions in the pathway aromatic compound metabolism; phenylpropanoid biosynthesis. Involved in lignin biosynthesis. Catalyzes the final step specific for the production of lignin monomers. Catalyzes the NADPH-dependent reduction of coniferaldehyde, 5-hydroxyconiferaldehyde, sinapaldehyde, 4-coumaraldehyde and caffeyl aldehyde to their respective alcohols. This is Probable cinnamyl alcohol dehydrogenase 1 (CAD1) from Aralia cordata (Udo).